The primary structure comprises 116 residues: Small ribosomal subunit protein uS8c (116 aa).

This sequence belongs to the universal ribosomal protein uS8 family. In terms of assembly, part of the 30S ribosomal subunit.

The protein localises to the plastid. The protein resides in the chloroplast. One of the primary rRNA binding proteins, it binds directly to 16S rRNA central domain where it helps coordinate assembly of the platform of the 30S subunit. This chain is Small ribosomal subunit protein uS8c (rps8), found in Musa acuminata (Banana).